The primary structure comprises 334 residues: uncharacterized protein (334 aa).

The protein belongs to the Gfo/Idh/MocA family.

This is an uncharacterized protein from Rhizobium meliloti (Ensifer meliloti).